Here is a 413-residue protein sequence, read N- to C-terminus: Phosphoglycerate kinase (413 aa).

Substrate is bound by residues 19–21 (DLN), Arg-34, 57–60 (HQSK), Arg-114, and Arg-154. Residues Glu-332 and 358-361 (GGHS) contribute to the ATP site.

The protein belongs to the phosphoglycerate kinase family. As to quaternary structure, monomer.

The protein resides in the cytoplasm. The enzyme catalyses (2R)-3-phosphoglycerate + ATP = (2R)-3-phospho-glyceroyl phosphate + ADP. It participates in carbohydrate degradation; glycolysis; pyruvate from D-glyceraldehyde 3-phosphate: step 2/5. This is Phosphoglycerate kinase from Thermococcus sibiricus (strain DSM 12597 / MM 739).